Reading from the N-terminus, the 179-residue chain is Large ribosomal subunit protein uL5 (179 aa).

This sequence belongs to the universal ribosomal protein uL5 family. Part of the 50S ribosomal subunit; part of the 5S rRNA/L5/L18/L25 subcomplex. Contacts the 5S rRNA and the P site tRNA. Forms a bridge to the 30S subunit in the 70S ribosome.

In terms of biological role, this is one of the proteins that bind and probably mediate the attachment of the 5S RNA into the large ribosomal subunit, where it forms part of the central protuberance. In the 70S ribosome it contacts protein S13 of the 30S subunit (bridge B1b), connecting the 2 subunits; this bridge is implicated in subunit movement. Contacts the P site tRNA; the 5S rRNA and some of its associated proteins might help stabilize positioning of ribosome-bound tRNAs. The chain is Large ribosomal subunit protein uL5 from Salmonella arizonae (strain ATCC BAA-731 / CDC346-86 / RSK2980).